The following is a 168-amino-acid chain: Photosystem I assembly protein Ycf3 (168 aa).

3 TPR repeats span residues 35-68 (AFTY…EIDP), 72-105 (SYIL…NPFL), and 120-153 (GEQA…TPGN).

This sequence belongs to the Ycf3 family.

Its subcellular location is the plastid. It localises to the chloroplast thylakoid membrane. Essential for the assembly of the photosystem I (PSI) complex. May act as a chaperone-like factor to guide the assembly of the PSI subunits. The protein is Photosystem I assembly protein Ycf3 of Solanum lycopersicum (Tomato).